Consider the following 643-residue polypeptide: Protein disulfide-isomerase A4 (643 aa).

An N-terminal signal peptide occupies residues 1-20 (MRPRKAWMLVLLLALVQLLA). 2 consecutive Thioredoxin domains span residues 21–168 (VASA…EVSQ) and 170–300 (NWTP…EFLK). Positions 24–54 (AGAPDEDSTDKEDAIEEDEEEDEDDDDDDDD) are disordered. Residues 27 to 54 (PDEDSTDKEDAIEEDEEEDEDDDDDDDD) show a composition bias toward acidic residues. A CXXC motif is present at residues 90–93 (CGHC). 2 cysteine pairs are disulfide-bonded: cysteine 90/cysteine 93 and cysteine 205/cysteine 208. Lysine 365 carries the post-translational modification N6-acetyllysine. Residues 503–634 (FKKGKLKPVI…LSKFIEEHAT (132 aa)) enclose the Thioredoxin 3 domain. The CXXC motif lies at 553–556 (CGHC). Cysteine 553 and cysteine 556 form a disulfide bridge. Residues 640 to 643 (KEEL) carry the Prevents secretion from ER motif.

Belongs to the protein disulfide isomerase family. Part of a large chaperone multiprotein complex comprising DNAJB11, HSP90B1, HSPA5, HYOU, PDIA2, PDIA4, PDIA6, PPIB, SDF2L1, UGGT1 and very small amounts of ERP29, but not, or at very low levels, CALR nor CANX. Component of a complex containing at least CRELD2, MANF, MATN3 and PDIA4.

Its subcellular location is the endoplasmic reticulum lumen. The protein localises to the melanosome. It carries out the reaction Catalyzes the rearrangement of -S-S- bonds in proteins.. The sequence is that of Protein disulfide-isomerase A4 (PDIA4) from Bos taurus (Bovine).